A 216-amino-acid chain; its full sequence is FMN-dependent NADH:quinone oxidoreductase 2 (216 aa).

FMN is bound by residues Ser-9, 15 to 17, 96 to 99, and 140 to 143; these read SVS, MYNF, and SRGG.

It belongs to the azoreductase type 1 family. Homodimer. FMN serves as cofactor.

The catalysed reaction is 2 a quinone + NADH + H(+) = 2 a 1,4-benzosemiquinone + NAD(+). The enzyme catalyses N,N-dimethyl-1,4-phenylenediamine + anthranilate + 2 NAD(+) = 2-(4-dimethylaminophenyl)diazenylbenzoate + 2 NADH + 2 H(+). Functionally, quinone reductase that provides resistance to thiol-specific stress caused by electrophilic quinones. Its function is as follows. Also exhibits azoreductase activity. Catalyzes the reductive cleavage of the azo bond in aromatic azo compounds to the corresponding amines. This Xanthomonas axonopodis pv. citri (strain 306) protein is FMN-dependent NADH:quinone oxidoreductase 2.